The primary structure comprises 1236 residues: DNA topoisomerase 2 (1236 aa).

ATP is bound by residues Asn65, Asn96, 124 to 126 (SSN), 137 to 144 (GRHGYGAK), and 354 to 356 (QSK). Residues 434–548 (RTLIITEGDS…KLLQNNPGYI (115 aa)) form the Toprim domain. Mg(2+) contacts are provided by Glu440, Asp517, and Asp519. The Topo IIA-type catalytic domain maps to 685 to 1101 (IPHCVDGLKP…TPVKMWLTEL (417 aa)). The active-site O-(5'-phospho-DNA)-tyrosine intermediate is the Tyr775. The interaction with DNA stretch occupies residues 956–965 (ALAQRIYING). A disordered region spans residues 1161–1211 (YEKPPPSKRRPGESVGGARPSDSAARTVGKRLVGSRSEFKNKKPMSRKNNV).

The protein belongs to the type II topoisomerase family. In terms of assembly, homodimer. Requires Mg(2+) as cofactor. The cofactor is Mn(2+). It depends on Ca(2+) as a cofactor.

Its subcellular location is the nucleus. The catalysed reaction is ATP-dependent breakage, passage and rejoining of double-stranded DNA.. Functionally, control of topological states of DNA by transient breakage and subsequent rejoining of DNA strands. Topoisomerase II makes double-strand breaks. The sequence is that of DNA topoisomerase 2 (TOP2) from Leishmania chagasi.